Reading from the N-terminus, the 509-residue chain is uncharacterized protein (509 aa).

13 consecutive transmembrane segments (helical) span residues 14–34 (SAFT…WVIP), 117–137 (TIEA…IGVI), 158–178 (EFFI…TCGI), 188–208 (ILVP…GAIF), 209–229 (LAAS…VIAS), 240–260 (IGFR…YLYW), 303–323 (LILT…MVGG), 324–344 (WWFP…MFIS), 359–379 (ASEL…NLVL), 399–419 (MPGS…GLIV), 423–443 (SGLA…VGIP), 458–478 (MLFL…QIPF), and 484–504 (FVMP…VVQV).

To E.coli YfcC. The protein to B.subtilis YcgA.

It is found in the cell membrane. This is an uncharacterized protein from Haemophilus influenzae (strain ATCC 51907 / DSM 11121 / KW20 / Rd).